Consider the following 116-residue polypeptide: Large ribosomal subunit protein bL20c (116 aa).

This sequence belongs to the bacterial ribosomal protein bL20 family.

The protein localises to the plastid. It localises to the chloroplast. In terms of biological role, binds directly to 23S ribosomal RNA and is necessary for the in vitro assembly process of the 50S ribosomal subunit. It is not involved in the protein synthesizing functions of that subunit. In Cryptomeria japonica (Japanese cedar), this protein is Large ribosomal subunit protein bL20c.